Reading from the N-terminus, the 496-residue chain is Flotillin-like protein 3 (496 aa).

A lipid anchor (S-palmitoyl cysteine) is attached at Cys-37. Residues 301 to 328 (VVREAELQLEVERKNALRLTEKLKAEKL) adopt a coiled-coil conformation.

Belongs to the band 7/mec-2 family. Flotillin subfamily. Post-translationally, may be palmitoylated.

It is found in the cell membrane. Its subcellular location is the membrane. The protein resides in the caveola. Functionally, may act as a scaffolding protein within caveolar membranes, functionally participating in formation of caveolae or caveolae-like vesicles. The polypeptide is Flotillin-like protein 3 (FLOT3) (Oryza sativa subsp. japonica (Rice)).